The sequence spans 270 residues: Protein-ADP-ribose hydrolase (270 aa).

One can recognise a Macro domain in the interval 73-267 (VSVKDCQKTN…LYDTYLQKEN (195 aa)). ADP-D-ribose contacts are provided by Asp-92, Ile-93, and Asn-106. Residues Cys-112, His-117, and Cys-119 each coordinate Zn(2+). ADP-D-ribose is bound by residues Cys-119, Ile-120, Asp-121, Ser-212, Thr-213, Gly-214, Glu-215, and Phe-216.

This sequence belongs to the MacroD-type family. Zn-Macro subfamily. It depends on Zn(2+) as a cofactor.

The catalysed reaction is 4-O-(ADP-D-ribosyl)-L-aspartyl-[protein] + H2O = L-aspartyl-[protein] + ADP-D-ribose + H(+). ADP-ribosylhydrolase that specifically reverses the SirTM-mediated mono-ADP-ribosylation at an asparatate residue of GcvH-L, by releasing ADP-ribose from the target protein. May play a role in the regulation of the response to host-induced oxidative stress. The polypeptide is Protein-ADP-ribose hydrolase (Streptococcus pyogenes serotype M1).